The following is a 217-amino-acid chain: Cytidylate kinase (217 aa).

10–18 (GPAGAGKST) is an ATP binding site.

Belongs to the cytidylate kinase family. Type 1 subfamily.

Its subcellular location is the cytoplasm. The catalysed reaction is CMP + ATP = CDP + ADP. It carries out the reaction dCMP + ATP = dCDP + ADP. This chain is Cytidylate kinase, found in Clostridium botulinum (strain ATCC 19397 / Type A).